The sequence spans 203 residues: Large ribosomal subunit protein uL13 (203 aa).

N-acetylalanine is present on Ala-2. Arg-59 bears the Citrulline mark. A Phosphoserine modification is found at Ser-77. Residue Arg-140 is modified to Citrulline. The residue at position 191 (Lys-191) is an N6-acetyllysine.

The protein belongs to the universal ribosomal protein uL13 family. As to quaternary structure, component of the 60S ribosome. Component of the GAIT complex. Interacts with EIF4G1. In terms of processing, phosphorylation at Ser-77 upon interferon-gamma treatment in macrophages involves a DAPK1-DAPK3 kinase cascade and is causing release from the ribosome, association with the GAIT complex and subsequent involvement in transcript-selective translation inhibition. Post-translationally, citrullinated by PADI4.

Its subcellular location is the cytoplasm. Associated with ribosomes but is not required for canonical ribosome function and has extra-ribosomal functions. Component of the GAIT (gamma interferon-activated inhibitor of translation) complex which mediates interferon-gamma-induced transcript-selective translation inhibition in inflammation processes. Upon interferon-gamma activation and subsequent phosphorylation dissociates from the ribosome and assembles into the GAIT complex which binds to stem loop-containing GAIT elements in the 3'-UTR of diverse inflammatory mRNAs (such as ceruplasmin) and suppresses their translation. In the GAIT complex interacts with m7G cap-bound eIF4G at or near the eIF3-binding site and blocks the recruitment of the 43S ribosomal complex. Involved in methylation of rRNA. In Rattus norvegicus (Rat), this protein is Large ribosomal subunit protein uL13 (Rpl13a).